Here is a 449-residue protein sequence, read N- to C-terminus: Heterogeneous nuclear ribonucleoprotein H (449 aa).

Met1 is subject to N-acetylmethionine. Residue Met2 is modified to N-acetylmethionine; in Heterogeneous nuclear ribonucleoprotein H, N-terminally processed. The RRM 1 domain maps to 11–90 (FVVKVRGLPW…RYVEVFKSNN (80 aa)). The residue at position 23 (Ser23) is a Phosphoserine. Lys35 is covalently cross-linked (Glycyl lysine isopeptide (Lys-Gly) (interchain with G-Cter in SUMO2)). Phosphoserine is present on residues Ser54 and Ser63. Glycyl lysine isopeptide (Lys-Gly) (interchain with G-Cter in SUMO2) cross-links involve residues Lys87 and Lys98. One can recognise an RRM 2 domain in the interval 111–188 (GFVRLRGLPF…RYIEIFKSSR (78 aa)). A Dimethylated arginine; alternate modification is found at Arg233. An Omega-N-methylarginine; alternate modification is found at Arg233. The stretch at 234 to 249 (GAYGGGYGGYDDYNGY) is one 1-1 repeat. The tract at residues 234-433 (GAYGGGYGGY…YGGQSSMSGY (200 aa)) is 2 X 16 AA Gly-rich approximate repeats. Tyr246 carries the phosphotyrosine modification. The 76-residue stretch at 289–364 (HCVHMRGLPY…RYVELFLNST (76 aa)) folds into the RRM 3 domain. Phosphoserine is present on Ser310. A run of 3 repeats spans residues 354-372 (HRYV…GGAY), 374-392 (HRYV…GGAY), and 418-433 (GGYG…MSGY). Residues 354–392 (HRYVELFLNSTAGASGGAYEHRYVELFLNSTAGASGGAY) form a 2 X 19 AA perfect repeats region.

In terms of assembly, part of a ternary complex containing FUBP2, PTBP1, PTBP2 and HNRNPH1. Identified in the spliceosome C complex. Interacts with IGF2BP1. Interacts with CUGBP1; the interaction is RNA-dependent. Interacts with MBNL1; the interaction in RNA-independent.

The protein resides in the nucleus. The protein localises to the nucleoplasm. In terms of biological role, this protein is a component of the heterogeneous nuclear ribonucleoprotein (hnRNP) complexes which provide the substrate for the processing events that pre-mRNAs undergo before becoming functional, translatable mRNAs in the cytoplasm. Mediates pre-mRNA alternative splicing regulation. Inhibits, together with CUGBP1, insulin receptor (IR) pre-mRNA exon 11 inclusion in myoblast. Binds to the IR RNA. Binds poly(RG). In Mus musculus (Mouse), this protein is Heterogeneous nuclear ribonucleoprotein H (Hnrnph1).